A 378-amino-acid polypeptide reads, in one-letter code: Probable pectin lyase A (378 aa).

Positions 1–18 (MKYQGLLAIAGCIASASA) are cleaved as a signal peptide. Intrachain disulfides connect Cys81/Cys100 and Cys90/Cys224. N-linked (GlcNAc...) asparagine glycosylation occurs at Asn127. The active site involves Arg254. A disulfide bridge links Cys321 with Cys329.

The protein belongs to the polysaccharide lyase 1 family.

Its subcellular location is the secreted. The catalysed reaction is Eliminative cleavage of (1-&gt;4)-alpha-D-galacturonan methyl ester to give oligosaccharides with 4-deoxy-6-O-methyl-alpha-D-galact-4-enuronosyl groups at their non-reducing ends.. Functionally, pectinolytic enzymes consist of four classes of enzymes: pectin lyase, polygalacturonase, pectin methylesterase and rhamnogalacturonase. Among pectinolytic enzymes, pectin lyase is the most important in depolymerization of pectin, since it cleaves internal glycosidic bonds of highly methylated pectins. This is Probable pectin lyase A (pelA) from Neosartorya fischeri (strain ATCC 1020 / DSM 3700 / CBS 544.65 / FGSC A1164 / JCM 1740 / NRRL 181 / WB 181) (Aspergillus fischerianus).